The sequence spans 423 residues: Histidine--tRNA ligase (423 aa).

It belongs to the class-II aminoacyl-tRNA synthetase family. In terms of assembly, homodimer.

The protein resides in the cytoplasm. The catalysed reaction is tRNA(His) + L-histidine + ATP = L-histidyl-tRNA(His) + AMP + diphosphate + H(+). In Bacillus cytotoxicus (strain DSM 22905 / CIP 110041 / 391-98 / NVH 391-98), this protein is Histidine--tRNA ligase.